The chain runs to 129 residues: Small ribosomal subunit protein uS13 (129 aa).

The span at 95–114 (NLPVRGQRTKTNARTRRGPR) shows a compositional bias: basic residues. The disordered stretch occupies residues 95 to 129 (NLPVRGQRTKTNARTRRGPRKTVAGRGQKRGATKK).

The protein belongs to the universal ribosomal protein uS13 family. As to quaternary structure, part of the 30S ribosomal subunit. Forms a loose heterodimer with protein S19. Forms two bridges to the 50S subunit in the 70S ribosome.

Functionally, located at the top of the head of the 30S subunit, it contacts several helices of the 16S rRNA. In the 70S ribosome it contacts the 23S rRNA (bridge B1a) and protein L5 of the 50S subunit (bridge B1b), connecting the 2 subunits; these bridges are implicated in subunit movement. Contacts the tRNAs in the A and P-sites. The sequence is that of Small ribosomal subunit protein uS13 from Dehalococcoides mccartyi (strain ATCC BAA-2100 / JCM 16839 / KCTC 5957 / BAV1).